Consider the following 507-residue polypeptide: ESX-5 secretion system ATPase EccB5 (507 aa).

A helical transmembrane segment spans residues 56 to 76; sequence VVASVSAALVICLGSLLWSFI.

This sequence belongs to the EccB family. In terms of assembly, part of the ESX-5 / type VII secretion system (T7SS), which is composed of cytosolic and membrane components. The ESX-5 membrane complex is composed of EccB5, EccC5, EccD5 and EccE5.

It is found in the cell inner membrane. Functionally, an ATPase. Part of the ESX-5 specialized secretion system, which is responsible for the secretion of EsxN and a number of PE_PGRS and PPE proteins. The sequence is that of ESX-5 secretion system ATPase EccB5 from Mycobacterium marinum (strain ATCC BAA-535 / M).